The primary structure comprises 106 residues: Gibberellin-regulated protein 12 (106 aa).

Positions 1 to 22 are cleaved as a signal peptide; that stretch reads MMKLIVVFVISSLLFATQFSNG.

This sequence belongs to the GASA family. Six disulfide bonds may be present.

It localises to the secreted. Gibberellin-regulated protein that may function in hormonal controlled steps of development such as seed germination, flowering and seed maturation. This is Gibberellin-regulated protein 12 (GASA12) from Arabidopsis thaliana (Mouse-ear cress).